Reading from the N-terminus, the 310-residue chain is Glutaminase (310 aa).

Positions 66, 117, 161, 168, 192, 244, and 262 each coordinate substrate.

This sequence belongs to the glutaminase family. As to quaternary structure, homotetramer.

It catalyses the reaction L-glutamine + H2O = L-glutamate + NH4(+). In Desulfovibrio desulfuricans (strain ATCC 27774 / DSM 6949 / MB), this protein is Glutaminase.